The chain runs to 240 residues: 2,3,4,5-tetrahydropyridine-2,6-dicarboxylate N-acetyltransferase (240 aa).

Belongs to the transferase hexapeptide repeat family. DapH subfamily.

It catalyses the reaction (S)-2,3,4,5-tetrahydrodipicolinate + acetyl-CoA + H2O = L-2-acetamido-6-oxoheptanedioate + CoA. The protein operates within amino-acid biosynthesis; L-lysine biosynthesis via DAP pathway; LL-2,6-diaminopimelate from (S)-tetrahydrodipicolinate (acetylase route): step 1/3. In terms of biological role, catalyzes the transfer of an acetyl group from acetyl-CoA to tetrahydrodipicolinate. This is 2,3,4,5-tetrahydropyridine-2,6-dicarboxylate N-acetyltransferase from Bacillus cereus (strain G9842).